A 242-amino-acid polypeptide reads, in one-letter code: Beta-glucanase (242 aa).

An N-terminal signal peptide occupies residues 1–28; it reads MPYLKRVLLLLVTGLFMSLFAVTATASA. Gln-29 carries the post-translational modification Pyrrolidone carboxylic acid. The GH16 domain occupies 29-242; it reads QTGGSFFDPF…HYDWVRYTKK (214 aa). An intrachain disulfide couples Cys-60 to Cys-89. Glu-133 serves as the catalytic Nucleophile. Glu-137 serves as the catalytic Proton donor.

The protein belongs to the glycosyl hydrolase 16 family.

It is found in the secreted. It carries out the reaction Hydrolysis of (1-&gt;4)-beta-D-glucosidic linkages in beta-D-glucans containing (1-&gt;3)- and (1-&gt;4)-bonds.. The chain is Beta-glucanase (bglS) from Bacillus subtilis (strain 168).